A 608-amino-acid polypeptide reads, in one-letter code: Elongation factor 4 (608 aa).

Residues 11–193 (SHIRNFSIVA…AIVHKLPAPK (183 aa)) form the tr-type G domain. Residues 23 to 28 (DHGKST) and 140 to 143 (NKID) each bind GTP.

This sequence belongs to the TRAFAC class translation factor GTPase superfamily. Classic translation factor GTPase family. LepA subfamily.

The protein localises to the cell inner membrane. The catalysed reaction is GTP + H2O = GDP + phosphate + H(+). Required for accurate and efficient protein synthesis under certain stress conditions. May act as a fidelity factor of the translation reaction, by catalyzing a one-codon backward translocation of tRNAs on improperly translocated ribosomes. Back-translocation proceeds from a post-translocation (POST) complex to a pre-translocation (PRE) complex, thus giving elongation factor G a second chance to translocate the tRNAs correctly. Binds to ribosomes in a GTP-dependent manner. The polypeptide is Elongation factor 4 (Rhizobium meliloti (strain 1021) (Ensifer meliloti)).